The primary structure comprises 353 residues: C-X-C chemokine receptor type 2 (353 aa).

The Extracellular segment spans residues 1–45; sequence FNMESDSFEDFWKGEDLSNYSYSSALPPFLLDASPCEPESLEINK. N19 carries N-linked (GlcNAc...) asparagine glycosylation. Residues 46–72 form a helical membrane-spanning segment; the sequence is YFVVIIYALVFLLSLLGNSLVILVILY. At 73–81 the chain is on the cytoplasmic side; it reads SRVGRSVTD. The helical transmembrane segment at 82–102 threads the bilayer; that stretch reads VYLLNLALADLLFALTLPIWA. Topologically, residues 103 to 117 are extracellular; it reads ASKVNGWIFGTFLCK. A disulfide bond links C116 and C193. Residues 118 to 139 form a helical membrane-spanning segment; sequence VVSLLKEVNFYSGILLLACISV. Residues 140–160 are Cytoplasmic-facing; it reads DRYLAIVHATRTLTQKRYLVK. The helical transmembrane segment at 161–180 threads the bilayer; the sequence is FICLSIWGLSLLLALPVLLF. Residues 181 to 205 lie on the Extracellular side of the membrane; it reads RRTIYPSNVSPVCYEDMGNNTANWR. The chain crosses the membrane as a helical span at residues 206–228; that stretch reads MLLRILPQSFGFIVPLLIMLFCY. The Cytoplasmic portion of the chain corresponds to 229–248; that stretch reads GFTLRTLFKAHMGQKHRAMR. A helical membrane pass occupies residues 249-270; that stretch reads VIFAVVLIFLLCWLPYNLVLLA. Topologically, residues 271 to 291 are extracellular; that stretch reads DTLMRTQVIQETCERRNHINQ. The chain crosses the membrane as a helical span at residues 292–312; it reads ALDATEILGILHSCLNPLIYA. Topologically, residues 313–353 are cytoplasmic; it reads FIGQKFCHGLLKILAIHGLISKDSLPKDSRPSFVGSSSGHT.

The protein belongs to the G-protein coupled receptor 1 family. In terms of assembly, interacts with IL8. Interacts with GNAI2. Post-translationally, phosphorylated upon ligand binding; which is required for desensitization.

It is found in the cell membrane. In terms of biological role, receptor for interleukin-8 which is a powerful neutrophil chemotactic factor. Binding of IL-8 to the receptor causes activation of neutrophils. This response is mediated via a G-protein that activates a phosphatidylinositol-calcium second messenger system. Binds to IL-8 with high affinity. Also binds with high affinity to CXCL3, GRO/MGSA and NAP-2. The sequence is that of C-X-C chemokine receptor type 2 (CXCR2) from Gorilla gorilla gorilla (Western lowland gorilla).